A 278-amino-acid polypeptide reads, in one-letter code: Large ribosomal subunit protein uL2 (278 aa).

The interval 201–278 (HGNINDGKAG…IMRSRHQRKK (78 aa)) is disordered. Residues 210-221 (GRSRWRGKKPHV) show a composition bias toward basic residues.

It belongs to the universal ribosomal protein uL2 family. As to quaternary structure, part of the 50S ribosomal subunit. Forms a bridge to the 30S subunit in the 70S ribosome.

In terms of biological role, one of the primary rRNA binding proteins. Required for association of the 30S and 50S subunits to form the 70S ribosome, for tRNA binding and peptide bond formation. It has been suggested to have peptidyltransferase activity; this is somewhat controversial. Makes several contacts with the 16S rRNA in the 70S ribosome. This chain is Large ribosomal subunit protein uL2, found in Rhizobium rhizogenes (strain K84 / ATCC BAA-868) (Agrobacterium radiobacter).